The following is a 180-amino-acid chain: Large ribosomal subunit protein uL5 (180 aa).

It belongs to the universal ribosomal protein uL5 family. As to quaternary structure, part of the 50S ribosomal subunit; part of the 5S rRNA/L5/L18/L25 subcomplex. Contacts the 5S rRNA and the P site tRNA. Forms a bridge to the 30S subunit in the 70S ribosome.

Functionally, this is one of the proteins that bind and probably mediate the attachment of the 5S RNA into the large ribosomal subunit, where it forms part of the central protuberance. In the 70S ribosome it contacts protein S13 of the 30S subunit (bridge B1b), connecting the 2 subunits; this bridge is implicated in subunit movement. Contacts the P site tRNA; the 5S rRNA and some of its associated proteins might help stabilize positioning of ribosome-bound tRNAs. The protein is Large ribosomal subunit protein uL5 of Stenotrophomonas maltophilia (strain R551-3).